The sequence spans 465 residues: D-arabinitol 4-dehydrogenase (465 aa).

It belongs to the mannitol dehydrogenase family.

It carries out the reaction D-arabinitol + NAD(+) = D-xylulose + NADH + H(+). It participates in carbohydrate metabolism; D-arabinitol metabolism. The protein is D-arabinitol 4-dehydrogenase (dalD) of Ralstonia nicotianae (strain ATCC BAA-1114 / GMI1000) (Ralstonia solanacearum).